Reading from the N-terminus, the 309-residue chain is Homoserine kinase (309 aa).

95–105 (PHGRGLGSSSA) serves as a coordination point for ATP.

This sequence belongs to the GHMP kinase family. Homoserine kinase subfamily.

It localises to the cytoplasm. The enzyme catalyses L-homoserine + ATP = O-phospho-L-homoserine + ADP + H(+). The protein operates within amino-acid biosynthesis; L-threonine biosynthesis; L-threonine from L-aspartate: step 4/5. Its function is as follows. Catalyzes the ATP-dependent phosphorylation of L-homoserine to L-homoserine phosphate. This Streptomyces coelicolor (strain ATCC BAA-471 / A3(2) / M145) protein is Homoserine kinase.